Consider the following 492-residue polypeptide: MEVARTVRIPHAFDGLTLSRQATMRRTLFLIPHEFAGWPIFGIGWALLFLLIAVLAYVGWESRRGGLGASTAIRQIAGFAVMAAVILVVVVPRTELVNTLGDPVGVAVRGYGMFLMLAAIASVGLAAWRAERAGLGADSILQLAPWTFIGGLLGARVFYVTQYYEDFLRPTWGETLMAMAALNQGGLVVYGGFIGGFIASLIALKRHQTPIWRIGDVIIPCVFVGLLFGRLGCLMNGCCYGGACEAGPLAVQFPAGSQVHAEQLLSGELLGIEGHPVVSDEEPPAGQSQMVVDSVRPDSLANQAGVKKGETLTIALDPSYRDQVPLDRPAEEALPGVVVLRDDEVVARFSPRDLPSIADPVWGTQIISSVFAAIMFVVLLIVERILHRPSKQTDDAVTERAITGGRRPGVLMLVGFIAYGVLRIVLEWIRVDEKGQFGTSLSISQWVSLVVIAASLVTLFIRWRGVDSTSEQTPGGGNTNVVGGSDAAAAGL.

A run of 9 helical transmembrane segments spans residues 40 to 60, 72 to 92, 106 to 126, 133 to 153, 184 to 204, 214 to 234, 361 to 381, 409 to 429, and 441 to 461; these read IFGI…YVGW, AIRQ…VVVP, VAVR…VGLA, AGLG…GGLL, QGGL…LIAL, IGDV…LGCL, VWGT…VLLI, GVLM…LEWI, and LSIS…TLFI. Position 230 (Arg-230) interacts with a 1,2-diacyl-sn-glycero-3-phospho-(1'-sn-glycerol).

Belongs to the Lgt family.

The protein localises to the cell inner membrane. It catalyses the reaction L-cysteinyl-[prolipoprotein] + a 1,2-diacyl-sn-glycero-3-phospho-(1'-sn-glycerol) = an S-1,2-diacyl-sn-glyceryl-L-cysteinyl-[prolipoprotein] + sn-glycerol 1-phosphate + H(+). The protein operates within protein modification; lipoprotein biosynthesis (diacylglyceryl transfer). In terms of biological role, catalyzes the transfer of the diacylglyceryl group from phosphatidylglycerol to the sulfhydryl group of the N-terminal cysteine of a prolipoprotein, the first step in the formation of mature lipoproteins. This chain is Phosphatidylglycerol--prolipoprotein diacylglyceryl transferase, found in Rhodopirellula baltica (strain DSM 10527 / NCIMB 13988 / SH1).